Here is a 327-residue protein sequence, read N- to C-terminus: Olfactory receptor 6A2 (327 aa).

The Extracellular segment spans residues 1–26 (MEWRNHSGRVSEFVLLGFPAPAPLQV). N-linked (GlcNAc...) asparagine glycosylation is present at Asn5. A helical transmembrane segment spans residues 27-47 (LLFALLLLAYVLVLTENTLII). The Cytoplasmic portion of the chain corresponds to 48 to 55 (MAIRNHST). The helical transmembrane segment at 56–76 (LHKPMYFFLANMSFLEIWYVT) threads the bilayer. At 77–104 (VTIPKMLAGFVGSKQDHGQLISFEGCMT) the chain is on the extracellular side. Cys102 and Cys194 are joined by a disulfide. A helical membrane pass occupies residues 105–125 (QLYFFLGLGCTECVLLAVMAY). Over 126 to 144 (DRYMAICYPLHYPVIVSGR) the chain is Cytoplasmic. The chain crosses the membrane as a helical span at residues 145-165 (LCVQMAAGSWAGGFGISMVKV). The Extracellular portion of the chain corresponds to 166–201 (FLISGLSYCGPNIINHFFCDVSPLLNLSCTDMSTAE). An N-linked (GlcNAc...) asparagine glycan is attached at Asn191. Residues 202 to 222 (LTDFILAIFILLGPLSVTGAS) traverse the membrane as a helical segment. Topologically, residues 223–242 (YVAITGAVMHIPSAAGRYKA) are cytoplasmic. The helical transmembrane segment at 243 to 263 (FSTCASHLTVVIIFYAASIFI) threads the bilayer. Residues 264-276 (YARPKALSAFDTN) are Extracellular-facing. A helical membrane pass occupies residues 277-297 (KLVSVLYAVIVPLLNPIIYCL). The Cytoplasmic segment spans residues 298–327 (RNQEVKRALCCTLHLYQHQDPDPKKASRNV).

It belongs to the G-protein coupled receptor 1 family.

The protein resides in the cell membrane. In terms of biological role, odorant receptor. The chain is Olfactory receptor 6A2 (OR6A2) from Homo sapiens (Human).